Reading from the N-terminus, the 732-residue chain is Acylamino-acid-releasing enzyme (732 aa).

Methionine 1 bears the N-acetylmethionine mark. Residue serine 187 is modified to Phosphoserine. Active-site charge relay system residues include serine 587, aspartate 675, and histidine 707.

It belongs to the peptidase S9C family. In terms of assembly, homotetramer. Expressed in the liver (at protein level).

The protein resides in the cytoplasm. The enzyme catalyses Cleavage of an N-acetyl or N-formyl amino acid from the N-terminus of a polypeptide.. Its activity is regulated as follows. Homotetramerization is required for activity. Tetramerization results in the formation of a gated channel which is involved in substrate selection and substrate access to the catalytic sites. In terms of biological role, this enzyme catalyzes the hydrolysis of the N-terminal peptide bond of an N-acetylated peptide to generate an N-acetylated amino acid and a peptide with a free N-terminus. It preferentially cleaves off Ac-Ala, Ac-Met and Ac-Ser. Also, involved in the degradation of oxidized and glycated proteins. The sequence is that of Acylamino-acid-releasing enzyme (APEH) from Sus scrofa (Pig).